Here is a 902-residue protein sequence, read N- to C-terminus: AP-4 complex accessory subunit RUSC1 (902 aa).

4 disordered regions span residues 31–67, 81–155, 189–227, and 247–450; these read ELQEGPLSTPPPPGDTGGKESRGPCSGTLVDANSNSP, LENR…PGTC, QDVPSPGLEEEDERAEQDLPTSELLEADDGKIDAGKTEP, and KTTE…AQAG. Residues 94–112 show a composition bias toward low complexity; sequence AASPSDPGCSSSLSSCSDL. Residues 249–261 are compositionally biased toward low complexity; the sequence is TENNNTGWKNNGN. Over residues 277-289 the composition is skewed to polar residues; that stretch reads WKTNTRITDSGSK. Positions 291–309 are enriched in basic and acidic residues; the sequence is DAGKIDGGWRSDVSEEPVP. Composition is skewed to pro residues over residues 381 to 390 and 398 to 407; these read PAPPVPPRDP and PPRPPPPPVP. The span at 433 to 450 shows a compositional bias: low complexity; that stretch reads PAAGEEAPAAKEPGAQAG. Positions 470–605 are interaction with TRAF6; the sequence is MAEAQSGTGQ…FHAFILGLLN (136 aa). The 145-residue stretch at 522 to 666 folds into the RUN domain; it reads DVGHLVLTTL…LTFHLDLLFE (145 aa). An interaction with IKBKG region spans residues 606-672; that stretch reads TKQLELWFSS…LLFEHHHHLP (67 aa). 2 disordered regions span residues 706-729 and 747-776; these read LRGTSKEAASDPSDSPNLPTPGSW and GFPLSRWAPGRHGTAAEEGAQERPLPTDEM. One can recognise an SH3 domain in the interval 844-902; the sequence is QTHRAVRALCDHTAARPDQLSFRRGEVLRVITTVDEDWLRCGRDGMEGLVPVGYTSLVL.

As to quaternary structure, associated component of the adapter-like complex 4 (AP-4). Interacts with IKBKG and TRAF6. Interacts with F-actin, acetylated actin, TUBB3, STX1A, KIF5B and KLC1. Post-translationally, phosphorylated on serine residues following nuclear translocation. In terms of processing, polyubiquitinated; polyubiquitination involves TRAF6. As to expression, predominantly expressed in brain.

It localises to the cytoplasm. The protein resides in the nucleus. It is found in the cytoskeleton. Its subcellular location is the cytoplasmic vesicle. The protein localises to the early endosome. It localises to the postsynaptic density. The protein resides in the golgi apparatus. Its function is as follows. Associates with the adapter-like complex 4 (AP-4) and may therefore play a role in vesicular trafficking of proteins at the trans-Golgi network. Signaling adapter which plays a role in neuronal differentiation. Involved in regulation of NGF-dependent neurite outgrowth. May play a role in neuronal vesicular trafficking, specifically involving pre-synaptic membrane proteins. Seems to be involved in signaling pathways that are regulated by the prolonged activation of MAPK. Can regulate the polyubiquitination of IKBKG and thus may be involved in regulation of the NF-kappa-B pathway. This chain is AP-4 complex accessory subunit RUSC1, found in Homo sapiens (Human).